Consider the following 363-residue polypeptide: G kinase-anchoring protein 1 (363 aa).

2 disordered regions span residues 22–124 (DSSS…QLTS) and 143–185 (EESK…KDFQ). Residues 54-79 (NEKKKEKRRKKKEQQQSEANELRNLA) are a coiled coil. Positions 98–107 (HSTHNVPKEY) are enriched in basic and acidic residues. The span at 160–170 (KVNKKDKRRNN) shows a compositional bias: basic residues. Coiled-coil stretches lie at residues 247–298 (LKDG…QEGE) and 328–348 (AALE…VKYQ).

It belongs to the GKAP1 family.

The protein localises to the golgi apparatus. May play a role in the regulation of insulin-dependent IRS1 tyrosine phosphorylation in adipocytes. The chain is G kinase-anchoring protein 1 (gkap1) from Xenopus tropicalis (Western clawed frog).